The following is a 141-amino-acid chain: Hemoglobin subunit alpha (141 aa).

Residues 1–22 (VLSEDDKNRVRTSVGKNPELPG) form a disordered region. The Globin domain occupies 1–141 (VLSEDDKNRV…VSEVLESKYR (141 aa)). His58 lines the O2 pocket. His87 is a binding site for heme b.

It belongs to the globin family. Heterotetramer of two alpha chains and two beta chains. In terms of tissue distribution, red blood cells.

Its function is as follows. Involved in oxygen transport from the lung to the various peripheral tissues. The chain is Hemoglobin subunit alpha (HBA) from Vipera aspis (Aspic viper).